The chain runs to 625 residues: Thioredoxin domain-containing protein 6 (625 aa).

The segment at 158–302 (KSYTVAIIKP…FFFPNFKISN (145 aa)) is NDK. The tract at residues 594–625 (GETPETSASDISRNAAAQGDDPEQDESKEMEE) is disordered. The segment covering 613-625 (DDPEQDESKEMEE) has biased composition (acidic residues).

This sequence belongs to the NDK family. As to quaternary structure, monomer and homodimer.

It localises to the cytoplasm. Its subcellular location is the cytoskeleton. The protein resides in the cilium axoneme. It is found in the dynein axonemal particle. Functionally, may be a regulator of microtubule physiology. The protein is Thioredoxin domain-containing protein 6 of Xenopus laevis (African clawed frog).